The chain runs to 425 residues: UDP-N-acetylglucosamine 1-carboxyvinyltransferase (425 aa).

A phosphoenolpyruvate-binding site is contributed by 23–24 (KN). Arg100 is a binding site for UDP-N-acetyl-alpha-D-glucosamine. Cys124 (proton donor) is an active-site residue. A 2-(S-cysteinyl)pyruvic acid O-phosphothioketal modification is found at Cys124. UDP-N-acetyl-alpha-D-glucosamine-binding positions include 169–172 (KVSV), Asp313, and Val335.

It belongs to the EPSP synthase family. MurA subfamily.

It localises to the cytoplasm. The enzyme catalyses phosphoenolpyruvate + UDP-N-acetyl-alpha-D-glucosamine = UDP-N-acetyl-3-O-(1-carboxyvinyl)-alpha-D-glucosamine + phosphate. Its pathway is cell wall biogenesis; peptidoglycan biosynthesis. Functionally, cell wall formation. Adds enolpyruvyl to UDP-N-acetylglucosamine. The protein is UDP-N-acetylglucosamine 1-carboxyvinyltransferase of Wolbachia pipientis subsp. Culex pipiens (strain wPip).